The chain runs to 196 residues: Large ribosomal subunit protein bL9 (196 aa).

The disordered stretch occupies residues 174-196 (QAAADLLEGGAGQQASEYTEAQA). Over residues 186-196 (QQASEYTEAQA) the composition is skewed to polar residues.

The protein belongs to the bacterial ribosomal protein bL9 family.

In terms of biological role, binds to the 23S rRNA. The polypeptide is Large ribosomal subunit protein bL9 (Phenylobacterium zucineum (strain HLK1)).